We begin with the raw amino-acid sequence, 395 residues long: uncharacterized protein (395 aa).

Helical transmembrane passes span Ile-19–Ile-39, Val-49–Leu-69, Leu-87–Gly-107, Leu-137–Thr-157, Tyr-172–Ile-192, Thr-206–Ala-226, Leu-252–Gly-272, Leu-279–Ala-299, Gly-311–Ile-331, and Val-359–Ile-379.

This sequence belongs to the chloride channel (TC 2.A.49) family.

The protein localises to the cell membrane. This is an uncharacterized protein from Methanocaldococcus jannaschii (strain ATCC 43067 / DSM 2661 / JAL-1 / JCM 10045 / NBRC 100440) (Methanococcus jannaschii).